Consider the following 281-residue polypeptide: UPF0162 protein XF_1494 (281 aa).

2 TPR repeats span residues 193-226 and 227-260; these read VRILRNLHSVYANTNRWDRAARCADRILKLVPNQ and PEALRDRGLAYLQLGHRSGARNDLTRYLQLYPST.

This sequence belongs to the UPF0162 family.

The polypeptide is UPF0162 protein XF_1494 (Xylella fastidiosa (strain 9a5c)).